The chain runs to 295 residues: 15-cis-phytoene synthase (295 aa).

The protein belongs to the phytoene/squalene synthase family. ATP is required as a cofactor. The cofactor is Mn(2+).

The catalysed reaction is 2 (2E,6E,10E)-geranylgeranyl diphosphate = 15-cis-phytoene + 2 diphosphate. Its pathway is carotenoid biosynthesis; phytoene biosynthesis. With respect to regulation, significant inhibition is seen at GGPP concentrations above 100 uM. In terms of biological role, involved in the biosynthesis of carotenoids. Catalyzes stereoselectively the condensation of two molecules of geranylgeranyl diphosphate (GGPP) to give prephytoene diphosphate (PPPP) and the subsequent rearrangement of the cyclopropylcarbinyl intermediate to yield 15-cis-phytoene. The chain is 15-cis-phytoene synthase (crtB) from Enterobacter agglomerans (Erwinia herbicola).